Here is a 384-residue protein sequence, read N- to C-terminus: Putative glutamate--cysteine ligase 2-2 (384 aa).

It belongs to the glutamate--cysteine ligase type 2 family. YbdK subfamily.

The enzyme catalyses L-cysteine + L-glutamate + ATP = gamma-L-glutamyl-L-cysteine + ADP + phosphate + H(+). In terms of biological role, ATP-dependent carboxylate-amine ligase which exhibits weak glutamate--cysteine ligase activity. In Rubrobacter xylanophilus (strain DSM 9941 / JCM 11954 / NBRC 16129 / PRD-1), this protein is Putative glutamate--cysteine ligase 2-2.